Here is a 197-residue protein sequence, read N- to C-terminus: Phosphoheptose isomerase (197 aa).

The SIS domain maps to 36 to 197 (MVNALLNEGK…IDSQLFGSEE (162 aa)). 51–53 (NGG) is a substrate binding site. Residues His60 and Glu64 each coordinate Zn(2+). Substrate is bound by residues Glu64, 93–94 (ND), 119–121 (STS), Ser124, and Gln174. The Zn(2+) site is built by Gln174 and His182.

Belongs to the SIS family. GmhA subfamily. In terms of assembly, homotetramer. The cofactor is Zn(2+).

It localises to the cytoplasm. The enzyme catalyses 2 D-sedoheptulose 7-phosphate = D-glycero-alpha-D-manno-heptose 7-phosphate + D-glycero-beta-D-manno-heptose 7-phosphate. The protein operates within carbohydrate biosynthesis; D-glycero-D-manno-heptose 7-phosphate biosynthesis; D-glycero-alpha-D-manno-heptose 7-phosphate and D-glycero-beta-D-manno-heptose 7-phosphate from sedoheptulose 7-phosphate: step 1/1. In terms of biological role, catalyzes the isomerization of sedoheptulose 7-phosphate in D-glycero-D-manno-heptose 7-phosphate. The protein is Phosphoheptose isomerase of Pseudomonas putida (strain GB-1).